Reading from the N-terminus, the 340-residue chain is Glycerol-3-phosphate dehydrogenase [NAD(P)+] (340 aa).

Positions 14, 15, 35, and 108 each coordinate NADPH. Sn-glycerol 3-phosphate is bound by residues lysine 108 and glycine 136. An NADPH-binding site is contributed by alanine 140. Residues lysine 191, aspartate 244, serine 254, arginine 255, and asparagine 256 each contribute to the sn-glycerol 3-phosphate site. The active-site Proton acceptor is lysine 191. Arginine 255 is an NADPH binding site. Residues valine 279 and glutamate 281 each contribute to the NADPH site.

The protein belongs to the NAD-dependent glycerol-3-phosphate dehydrogenase family.

It localises to the cytoplasm. It catalyses the reaction sn-glycerol 3-phosphate + NAD(+) = dihydroxyacetone phosphate + NADH + H(+). The enzyme catalyses sn-glycerol 3-phosphate + NADP(+) = dihydroxyacetone phosphate + NADPH + H(+). It functions in the pathway membrane lipid metabolism; glycerophospholipid metabolism. In terms of biological role, catalyzes the reduction of the glycolytic intermediate dihydroxyacetone phosphate (DHAP) to sn-glycerol 3-phosphate (G3P), the key precursor for phospholipid synthesis. In Ectopseudomonas mendocina (strain ymp) (Pseudomonas mendocina), this protein is Glycerol-3-phosphate dehydrogenase [NAD(P)+].